The following is an 896-amino-acid chain: Zinc finger protein 574 (896 aa).

3 C2H2-type zinc fingers span residues tyrosine 16–histidine 38, tyrosine 76–histidine 98, and tyrosine 126–histidine 148. The residue at position 164 (serine 164) is a Phosphoserine. Residues tyrosine 214–histidine 236 form a C2H2-type 4 zinc finger. A disordered region spans residues alanine 239–alanine 301. The segment covering proline 247–serine 257 has biased composition (polar residues). Residues histidine 274–aspartate 287 are compositionally biased toward basic and acidic residues. Serine 298 is subject to Phosphoserine. 4 consecutive C2H2-type zinc fingers follow at residues leucine 309–histidine 331, phenylalanine 336–histidine 358, phenylalanine 364–histidine 386, and histidine 392–histidine 413. A disordered region spans residues phenylalanine 434–proline 460. 6 C2H2-type zinc fingers span residues tyrosine 466 to histidine 489, histidine 495 to histidine 517, phenylalanine 523 to histidine 545, tyrosine 551 to histidine 573, tyrosine 579 to histidine 601, and tyrosine 607 to histidine 630. A C2H2-type 15; degenerate zinc finger spans residues histidine 636–alanine 659. A C2H2-type 16 zinc finger spans residues phenylalanine 667–histidine 689. The interval alanine 687–alanine 733 is disordered. Residues alanine 707–proline 732 show a composition bias toward low complexity. Position 717 is a phosphoserine (serine 717). Position 724 is a phosphothreonine (threonine 724). The residue at position 728 (serine 728) is a Phosphoserine. 4 C2H2-type zinc fingers span residues leucine 738–histidine 760, tyrosine 766–histidine 788, phenylalanine 794–histidine 816, and tyrosine 822–histidine 844. Arginine 832 bears the Asymmetric dimethylarginine mark.

This sequence belongs to the krueppel C2H2-type zinc-finger protein family.

The protein resides in the nucleus. Functionally, may be involved in transcriptional regulation. The polypeptide is Zinc finger protein 574 (ZNF574) (Macaca fascicularis (Crab-eating macaque)).